The chain runs to 132 residues: Large ribosomal subunit protein uL14 (132 aa).

This sequence belongs to the universal ribosomal protein uL14 family. As to quaternary structure, part of the 50S ribosomal subunit. Forms a cluster with proteins L3 and L24e, part of which may contact the 16S rRNA in 2 intersubunit bridges.

Functionally, binds to 23S rRNA. Forms part of two intersubunit bridges in the 70S ribosome. The protein is Large ribosomal subunit protein uL14 of Methanocorpusculum labreanum (strain ATCC 43576 / DSM 4855 / Z).